We begin with the raw amino-acid sequence, 128 residues long: MQERFSAVLLVGAGGFAGASARYLIAVALSSFATGFPMATMLVNVLGCFLIGMISELSLTTSLLPSELRLLLATGFCGGFTTFSSYMYEISALLKDGELFYASLYLIGSLVGGMVFLYLGMALARVWS.

4 helical membrane passes run 7–27, 34–54, 70–90, and 104–124; these read AVLLVGAGGFAGASARYLIAV, TGFPMATMLVNVLGCFLIGMI, LLLATGFCGGFTTFSSYMYEI, and LYLIGSLVGGMVFLYLGMALA. Na(+) contacts are provided by glycine 78 and threonine 81.

Belongs to the fluoride channel Fluc/FEX (TC 1.A.43) family.

Its subcellular location is the cell inner membrane. It catalyses the reaction fluoride(in) = fluoride(out). Na(+) is not transported, but it plays an essential structural role and its presence is essential for fluoride channel function. In terms of biological role, fluoride-specific ion channel. Important for reducing fluoride concentration in the cell, thus reducing its toxicity. The chain is Fluoride-specific ion channel FluC from Prosthecochloris aestuarii (strain DSM 271 / SK 413).